We begin with the raw amino-acid sequence, 354 residues long: ATPase GET3 (354 aa).

Residue 26-33 (KGGVGKTT) coordinates ATP. The active site involves Asp-57. ATP is bound by residues Glu-245 and Asn-272. Residues Cys-285 and Cys-288 each contribute to the Zn(2+) site.

Belongs to the arsA ATPase family. Homodimer. Component of the Golgi to ER traffic (GET) complex, which is composed of GET1, GET2 and GET3. Within the complex, GET1 and GET2 form a heterotetramer which is stabilized by phosphatidylinositol binding and which binds to the GET3 homodimer. Interacts with the chloride channel protein GEF1.

The protein localises to the cytoplasm. Its subcellular location is the endoplasmic reticulum. The protein resides in the golgi apparatus. In terms of biological role, ATPase required for the post-translational delivery of tail-anchored (TA) proteins to the endoplasmic reticulum. Recognizes and selectively binds the transmembrane domain of TA proteins in the cytosol. This complex then targets to the endoplasmic reticulum by membrane-bound receptors GET1 and GET2, where the tail-anchored protein is released for insertion. This process is regulated by ATP binding and hydrolysis. ATP binding drives the homodimer towards the closed dimer state, facilitating recognition of newly synthesized TA membrane proteins. ATP hydrolysis is required for insertion. Subsequently, the homodimer reverts towards the open dimer state, lowering its affinity for the GET1-GET2 receptor, and returning it to the cytosol to initiate a new round of targeting. Cooperates with the HDEL receptor ERD2 to mediate the ATP-dependent retrieval of resident ER proteins that contain a C-terminal H-D-E-L retention signal from the Golgi to the ER. Involved in low-level resistance to the oxyanions arsenite and arsenate, and in heat tolerance. The protein is ATPase GET3 of Saccharomyces cerevisiae (strain RM11-1a) (Baker's yeast).